A 473-amino-acid chain; its full sequence is Protein AUXIN RESPONSE 4 (473 aa).

Over residues 1–10 (MAIITEEEED) the composition is skewed to acidic residues. The segment at 1–38 (MAIITEEEEDPKTLNPPKNKPKDSDFTKSESTMKNPKP) is disordered. Residues 29 to 38 (SESTMKNPKP) show a composition bias toward polar residues. Residues 44–64 (FPFWFYFTVVVSLATIIFISL) traverse the membrane as a helical segment. Residues 119-283 (TVVIVHGLGL…DSSISPALPL (165 aa)) form the AB hydrolase-1 domain.

In terms of tissue distribution, most abundant in root tissue, lesser amounts in rosette leaves, stems and flowers and very little in mature siliques.

The protein localises to the endoplasmic reticulum membrane. Required for the auxin influx facilitator AUX1 polar trafficking and its asymmetric localization within the plasma membrane. Not involved in the PIN proteins localization. The chain is Protein AUXIN RESPONSE 4 (AXR4) from Arabidopsis thaliana (Mouse-ear cress).